The following is a 230-amino-acid chain: Cytidylate kinase (230 aa).

ATP is bound at residue 12-20 (GPSGAGKGT).

This sequence belongs to the cytidylate kinase family. Type 1 subfamily.

Its subcellular location is the cytoplasm. The enzyme catalyses CMP + ATP = CDP + ADP. It catalyses the reaction dCMP + ATP = dCDP + ADP. The polypeptide is Cytidylate kinase (Yersinia pseudotuberculosis serotype O:1b (strain IP 31758)).